Consider the following 445-residue polypeptide: Phosphoglucosamine mutase (445 aa).

The active-site Phosphoserine intermediate is Ser102. The Mg(2+) site is built by Ser102, Asp241, Asp243, and Asp245. Ser102 is modified (phosphoserine).

Belongs to the phosphohexose mutase family. Requires Mg(2+) as cofactor. Activated by phosphorylation.

It carries out the reaction alpha-D-glucosamine 1-phosphate = D-glucosamine 6-phosphate. In terms of biological role, catalyzes the conversion of glucosamine-6-phosphate to glucosamine-1-phosphate. In Escherichia coli O81 (strain ED1a), this protein is Phosphoglucosamine mutase.